The sequence spans 101 residues: Interleukin-8 (101 aa).

Positions 1 to 22 (MTSKLAIALLAAFLLSAALCKA) are cleaved as a signal peptide. Residue R27 is modified to Citrulline. 2 cysteine pairs are disulfide-bonded: C34–C61 and C36–C77.

The protein belongs to the intercrine alpha (chemokine CxC) family. Homodimer. In terms of processing, citrullination at Arg-27 prevents proteolysis, and dampens tissue inflammation, it also enhances leukocytosis, possibly through impaired chemokine clearance from the blood circulation.

Its subcellular location is the secreted. Chemotactic factor that mediates inflammatory response by attracting neutrophils, basophils, and T-cells to clear pathogens and protect the host from infection. Also plays an important role in neutrophil activation. Released in response to an inflammatory stimulus, exerts its effect by binding to the G-protein-coupled receptors CXCR1 and CXCR2, primarily found in neutrophils, monocytes and endothelial cells. G-protein heterotrimer (alpha, beta, gamma subunits) constitutively binds to CXCR1/CXCR2 receptor and activation by IL8 leads to beta and gamma subunits release from Galpha (GNAI2 in neutrophils) and activation of several downstream signaling pathways including PI3K and MAPK pathways. The protein is Interleukin-8 (CXCL8) of Tursiops truncatus (Atlantic bottle-nosed dolphin).